The following is a 435-amino-acid chain: Glutamyl-tRNA reductase (435 aa).

Residues 49–52 (TCNR), S109, 114–116 (EGQ), and Q120 each bind substrate. The active-site Nucleophile is C50. Position 198–203 (198–203 (GAGRMS)) interacts with NADP(+).

This sequence belongs to the glutamyl-tRNA reductase family. As to quaternary structure, homodimer.

It catalyses the reaction (S)-4-amino-5-oxopentanoate + tRNA(Glu) + NADP(+) = L-glutamyl-tRNA(Glu) + NADPH + H(+). It functions in the pathway porphyrin-containing compound metabolism; protoporphyrin-IX biosynthesis; 5-aminolevulinate from L-glutamyl-tRNA(Glu): step 1/2. It participates in porphyrin-containing compound metabolism; chlorophyll biosynthesis. Functionally, catalyzes the NADPH-dependent reduction of glutamyl-tRNA(Glu) to glutamate 1-semialdehyde (GSA). This Prochlorococcus marinus (strain MIT 9211) protein is Glutamyl-tRNA reductase.